Reading from the N-terminus, the 176-residue chain is 3-hydroxydecanoyl-[acyl-carrier-protein] dehydratase (176 aa).

His75 is an active-site residue.

This sequence belongs to the thioester dehydratase family. FabA subfamily. Homodimer.

The protein localises to the cytoplasm. The enzyme catalyses a (3R)-hydroxyacyl-[ACP] = a (2E)-enoyl-[ACP] + H2O. It carries out the reaction (3R)-hydroxydecanoyl-[ACP] = (2E)-decenoyl-[ACP] + H2O. It catalyses the reaction (2E)-decenoyl-[ACP] = (3Z)-decenoyl-[ACP]. The protein operates within lipid metabolism; fatty acid biosynthesis. Necessary for the introduction of cis unsaturation into fatty acids. Catalyzes the dehydration of (3R)-3-hydroxydecanoyl-ACP to E-(2)-decenoyl-ACP and then its isomerization to Z-(3)-decenoyl-ACP. Can catalyze the dehydratase reaction for beta-hydroxyacyl-ACPs with saturated chain lengths up to 16:0, being most active on intermediate chain length. The chain is 3-hydroxydecanoyl-[acyl-carrier-protein] dehydratase from Haemophilus ducreyi (strain 35000HP / ATCC 700724).